The following is a 627-amino-acid chain: Neutral endopeptidase (627 aa).

The region spanning Met-1–Trp-627 is the Peptidase M13 domain. His-475 provides a ligand contact to Zn(2+). Glu-476 is an active-site residue. Zn(2+) is bound by residues His-479 and Glu-535. The active-site Proton donor is the Asp-539.

Belongs to the peptidase M13 family. As to quaternary structure, monomer. Requires Zn(2+) as cofactor.

Its subcellular location is the cytoplasm. Functionally, endopeptidase with broad substrate specificity for several oligopeptides. This Lactococcus lactis subsp. cremoris (Streptococcus cremoris) protein is Neutral endopeptidase (pepO).